The chain runs to 209 residues: Cytidylyl-2-hydroxypropylphosphonate hydrolase (209 aa).

Asn-111, Asp-127, Glu-129, and Asp-131 together coordinate a divalent metal cation. Lys-144 acts as the Proton donor in catalysis. Position 145 (Asp-145) interacts with a divalent metal cation.

Belongs to the FomD family. In terms of assembly, monomer in solution. The cofactor is Mn(2+). Co(2+) serves as cofactor.

The enzyme catalyses cytidine 5'-({hydroxy[(S)-2-hydroxypropyl]phosphonoyl}phosphate) + H2O = (S)-2-hydroxypropylphosphonate + CMP + H(+). It functions in the pathway antibiotic biosynthesis; fosfomycin biosynthesis. With respect to regulation, hydrolysis of (S)-HPP-CMP is inhibited by CDP. Involved in fosfomycin biosynthesis. Catalyzes the hydrolysis of cytidylyl (S)-2-hydroxypropylphosphonate ((S)-HPP-CMP) to give (S)-2-hydroxypropylphosphonate ((S)-HPP) and CMP. Can also hydrolyze (R)-HPP-CMP and cytidylyl 2-hydroxyethylphosphonate (HEP-CMP), which is a biosynthetic intermediate before C-methylation, but the catalytic efficiency is much higher with (S)-HPP-CMP. The protein is Cytidylyl-2-hydroxypropylphosphonate hydrolase of Streptomyces wedmorensis.